Reading from the N-terminus, the 290-residue chain is Oxaloacetate decarboxylase 2 (290 aa).

A substrate-binding site is contributed by Ser-50. Residue Asp-88 participates in Mg(2+) binding. Substrate-binding residues include Arg-159 and His-235.

It belongs to the isocitrate lyase/PEP mutase superfamily. Oxaloacetate decarboxylase family. As to quaternary structure, homotetramer; dimer of dimers. It depends on Mg(2+) as a cofactor.

The catalysed reaction is oxaloacetate + H(+) = pyruvate + CO2. In terms of biological role, catalyzes the decarboxylation of oxaloacetate into pyruvate. Seems to play a role in maintaining cellular concentrations of bicarbonate and pyruvate. This Pseudomonas fluorescens (strain Pf0-1) protein is Oxaloacetate decarboxylase 2.